The sequence spans 456 residues: PTS system sucrose-specific EIIBC component (456 aa).

Residues Glu4–Ser87 form the PTS EIIB type-1 domain. The Phosphocysteine intermediate; for EIIB activity role is filled by Cys26. Residues Arg107 to Glu456 form the PTS EIIC type-1 domain. The next 10 helical transmembrane spans lie at Ile112–Met132, Ala144–Ile164, Thr181–Phe201, Met213–Val233, Leu247–Gly267, Ala288–Ile308, Phe329–Trp349, Ile360–Ile380, Phe388–Tyr408, and Leu428–Val448.

It is found in the cell inner membrane. The catalysed reaction is N(pros)-phospho-L-histidyl-[protein](out) + sucrose = sucrose 6(G)-phosphate(in) + L-histidyl-[protein]. Its function is as follows. The phosphoenolpyruvate-dependent sugar phosphotransferase system (sugar PTS), a major carbohydrate active transport system, catalyzes the phosphorylation of incoming sugar substrates concomitantly with their translocation across the cell membrane. This system is involved in sucrose transport. The polypeptide is PTS system sucrose-specific EIIBC component (Salmonella typhimurium).